The following is a 196-amino-acid chain: MAERGQSSSAEGGASSQLVVVGRILGVHGVKGWVKVYSYTDPMVNLQQYQPWHLKQGALNSGGSSAAGTWKPVKVTGFRPQGKGLIAQLEGVSDREAAAALVGQDIGVPADLLPQSGQGEYYWRDLIGLRVKHVNGMDLGSVTRMVETGANDVVVVRGDRNSLDRRERLIPWLPEDVITAISLEDGEMTVDWDPDF.

Positions 118-196 constitute a PRC barrel domain; it reads QGEYYWRDLI…EMTVDWDPDF (79 aa).

This sequence belongs to the RimM family. As to quaternary structure, binds ribosomal protein uS19.

Its subcellular location is the cytoplasm. Functionally, an accessory protein needed during the final step in the assembly of 30S ribosomal subunit, possibly for assembly of the head region. Essential for efficient processing of 16S rRNA. May be needed both before and after RbfA during the maturation of 16S rRNA. It has affinity for free ribosomal 30S subunits but not for 70S ribosomes. This Alcanivorax borkumensis (strain ATCC 700651 / DSM 11573 / NCIMB 13689 / SK2) protein is Ribosome maturation factor RimM.